A 161-amino-acid polypeptide reads, in one-letter code: Allophycocyanin beta chain (161 aa).

Asparagine 71 is subject to N4-methylasparagine. Cysteine 81 serves as a coordination point for (2R,3E)-phycocyanobilin.

It belongs to the phycobiliprotein family. As to quaternary structure, heterodimer of an alpha and a beta chain. Contains one covalently linked phycocyanobilin chromophore.

The protein resides in the cellular thylakoid membrane. Functionally, light-harvesting photosynthetic bile pigment-protein from the phycobiliprotein complex. Allophycocyanin has a maximum absorption at approximately 650 nanometers. The protein is Allophycocyanin beta chain (apcB) of Synechocystis sp. (strain PCC 6714) (Aphanocapsa sp. (strain PCC 6714)).